The primary structure comprises 1291 residues: DNA-directed RNA polymerase subunit beta' (1291 aa).

Residues Cys60, Cys62, Cys75, and Cys78 each contribute to the Zn(2+) site. Residues Asp535, Asp537, and Asp539 each coordinate Mg(2+). The Zn(2+) site is built by Cys874, Cys951, Cys958, and Cys961.

It belongs to the RNA polymerase beta' chain family. The RNAP catalytic core consists of 2 alpha, 1 beta, 1 beta' and 1 omega subunit. When a sigma factor is associated with the core the holoenzyme is formed, which can initiate transcription. Mg(2+) is required as a cofactor. It depends on Zn(2+) as a cofactor.

It catalyses the reaction RNA(n) + a ribonucleoside 5'-triphosphate = RNA(n+1) + diphosphate. DNA-dependent RNA polymerase catalyzes the transcription of DNA into RNA using the four ribonucleoside triphosphates as substrates. The protein is DNA-directed RNA polymerase subunit beta' of Leifsonia xyli subsp. xyli (strain CTCB07).